Here is a 309-residue protein sequence, read N- to C-terminus: Probable lipid kinase YegS-like (309 aa).

Residues 1–134 (MAPSHWRLIL…VDLLRIDAEH (134 aa)) enclose the DAGKc domain. ATP-binding positions include Thr-39, 65 to 71 (GDGTLSE), and Thr-96. Val-219, Asp-222, and Leu-224 together coordinate Mg(2+). Glu-280 (proton acceptor) is an active-site residue.

The protein belongs to the diacylglycerol/lipid kinase family. YegS lipid kinase subfamily. It depends on Mg(2+) as a cofactor. Requires Ca(2+) as cofactor.

Its subcellular location is the cytoplasm. In terms of biological role, probably phosphorylates lipids; the in vivo substrate is unknown. The sequence is that of Probable lipid kinase YegS-like from Xanthomonas oryzae pv. oryzae (strain MAFF 311018).